The chain runs to 336 residues: Serpentine receptor class alpha-10 (336 aa).

Over 1–28 (MGPITANSSKCATEDQMILQTSLLLRIN) the chain is Extracellular. The chain crosses the membrane as a helical span at residues 29-49 (VIIMTIVAIITFILTYKALFI). Over 50-61 (LKIRPIFHSSTK) the chain is Cytoplasmic. A helical transmembrane segment spans residues 62-82 (ILLYTSLLFVNVHAVIFMVIQ). Over 83–107 (NTALIRSFTLSDKPCEIMRTTLECR) the chain is Extracellular. A helical membrane pass occupies residues 108 to 128 (FQNHVLIFGIAGVNFNQFGLT). The Cytoplasmic segment spans residues 129–148 (VDRLLATIIPQSYSHMGALP). Residues 149–169 (GVILSVLVVACSIAAPLIIAI) form a helical membrane-spanning segment. Over 170 to 192 (GDPYDDIVPNCFFFPEHSAPRAN) the chain is Extracellular. A helical membrane pass occupies residues 193 to 213 (IFLVTLSTLVITSIFLNFIII). Residues 214–243 (YANKKLEKGCRTRFYVTQRYQKREALISTR) lie on the Cytoplasmic side of the membrane. A helical membrane pass occupies residues 244–264 (IISYIAASQFLGLTLYSTMVL). Residues 265–280 (TLRLHKSMIPISIYHN) lie on the Extracellular side of the membrane. Residues 281-301 (MVWWAYTVPFAAVSLPALLIY) traverse the membrane as a helical segment. Residues 302–336 (RINQVGSNRKRVINRITAKVETQEEHMKSLKELWA) are Cytoplasmic-facing.

The protein belongs to the nematode receptor-like protein sra family. In terms of tissue distribution, expressed in the URX sensory neuron, the ALA interneuron and in additional interneurons, pharyngeal neurons and muscle.

It localises to the membrane. The polypeptide is Serpentine receptor class alpha-10 (sra-10) (Caenorhabditis elegans).